We begin with the raw amino-acid sequence, 93 residues long: Large ribosomal subunit protein bL27 (93 aa).

Positions 1–22 (MAHKKAGGSSRNGRDSEGRRLG) are disordered.

This sequence belongs to the bacterial ribosomal protein bL27 family.

This is Large ribosomal subunit protein bL27 from Methylobacterium sp. (strain 4-46).